Here is a 304-residue protein sequence, read N- to C-terminus: Proline dehydrogenase 2 (304 aa).

Lys97 is a binding site for substrate. Asp131 is a catalytic residue. Residues Met132 and Gln160 each coordinate FAD. Arg181 is an active-site residue. FAD-binding positions include 184-186 and 223-224; these read KGA and TH. 285–286 provides a ligand contact to substrate; that stretch reads RR.

The protein belongs to the proline dehydrogenase family. Requires FAD as cofactor.

It catalyses the reaction L-proline + a quinone = (S)-1-pyrroline-5-carboxylate + a quinol + H(+). The protein operates within amino-acid degradation; L-proline degradation into L-glutamate; L-glutamate from L-proline: step 1/2. Functionally, converts proline to delta-1-pyrroline-5-carboxylate. The chain is Proline dehydrogenase 2 from Bacillus subtilis subsp. natto.